Here is a 1350-residue protein sequence, read N- to C-terminus: Zinc finger protein Xfin (1350 aa).

Residues 1-58 (MEEPKCLQREMYKSVMTENYQCVLSLGYPIRKPEIVSMMEVGEELWSKNDSARPGQKE) enclose the KRAB domain. The segment at 47 to 68 (SKNDSARPGQKEVEGETPKESD) is disordered. 37 consecutive C2H2-type zinc fingers follow at residues 108 to 130 (HICS…QRMH), 136 to 158 (HHCP…QRTH), 164 to 186 (YQCV…QRTH), 192 to 214 (YTCL…RRTH), 220 to 242 (YRCS…LRTH), 248 to 270 (YECP…KRTH), 276 to 298 (FRCS…MRKH), 326 to 348 (YSCS…QQTH), 354 to 376 (YLCS…FRTH), 382 to 404 (YQCA…LRTH), 410 to 432 (FKCS…QRTH), 438 to 460 (YKCS…QRIH), 466 to 488 (YKCT…QKVH), 503 to 525 (HKCS…SKLH), 531 to 553 (FQCA…IRVH), 559 to 581 (FKCL…WRIH), 587 to 609 (FPCY…HRTH), 615 to 637 (HKCS…SRTH), 643 to 665 (YPCT…QRIH), 671 to 693 (YHCT…RRTH), 699 to 721 (YRCP…LVVH), 750 to 772 (YPCT…LRTH), 778 to 800 (YPCN…LRTH), 806 to 828 (YHCP…QRTH), 834 to 856 (YTCS…MRTH), 862 to 884 (YKCE…QRIH), 890 to 912 (YHCP…QRIH), 918 to 940 (YPCG…LKCH), 988 to 1010 (FKCN…VRIH), 1016 to 1038 (YKCS…YRTH), 1044 to 1066 (YKCG…QRVH), 1136 to 1158 (YSCS…WRMH), 1164 to 1186 (YTCK…VRIH), 1192 to 1214 (YPCS…QRIH), 1220 to 1242 (YTCT…SRTH), 1248 to 1270 (YKCN…MRTH), and 1276 to 1298 (YGCN…QRMC).

This sequence belongs to the krueppel C2H2-type zinc-finger protein family. Post-translationally, phosphorylated. Phosphorylation enhances RNA binding. Expressed in oocytes, and in specialized cell types such as neural retina cones in adults.

The protein resides in the cytoplasm. Its function is as follows. Binds to poly-G sequences in RNA. May function in post-translational regulation processes. This is Zinc finger protein Xfin from Xenopus laevis (African clawed frog).